Reading from the N-terminus, the 372-residue chain is Glycerophosphodiester phosphodiesterase GDPD6 (372 aa).

A signal peptide spans 1 to 21 (MAFKYLLPLLLLSLLVANCAS). Residues 32–58 (KHATKKPLQTSRPYNLAHRGSNGELPE) form a disordered region. The GP-PDE domain occupies 44–362 (PYNLAHRGSN…DFTGSLHNYQ (319 aa)). Asparagine 120, asparagine 239, and asparagine 260 each carry an N-linked (GlcNAc...) asparagine glycan.

This sequence belongs to the glycerophosphoryl diester phosphodiesterase family. Expressed in flowers and siliques.

It catalyses the reaction a sn-glycero-3-phosphodiester + H2O = an alcohol + sn-glycerol 3-phosphate + H(+). The chain is Glycerophosphodiester phosphodiesterase GDPD6 from Arabidopsis thaliana (Mouse-ear cress).